The sequence spans 151 residues: Ribosome maturation factor RimP (151 aa).

This sequence belongs to the RimP family.

The protein localises to the cytoplasm. Required for maturation of 30S ribosomal subunits. In Vibrio vulnificus (strain CMCP6), this protein is Ribosome maturation factor RimP.